We begin with the raw amino-acid sequence, 125 residues long: Small ribosomal subunit protein uS12 (125 aa).

A 3-methylthioaspartic acid modification is found at D89. Residues 101–125 form a disordered region; the sequence is SLDTAGVKDRKQSRSKYGAKRPKKA. Over residues 113–125 the composition is skewed to basic residues; the sequence is SRSKYGAKRPKKA.

The protein belongs to the universal ribosomal protein uS12 family. Part of the 30S ribosomal subunit. Contacts proteins S8 and S17. May interact with IF1 in the 30S initiation complex.

Its function is as follows. With S4 and S5 plays an important role in translational accuracy. In terms of biological role, interacts with and stabilizes bases of the 16S rRNA that are involved in tRNA selection in the A site and with the mRNA backbone. Located at the interface of the 30S and 50S subunits, it traverses the body of the 30S subunit contacting proteins on the other side and probably holding the rRNA structure together. The combined cluster of proteins S8, S12 and S17 appears to hold together the shoulder and platform of the 30S subunit. This Thiobacillus denitrificans (strain ATCC 25259 / T1) protein is Small ribosomal subunit protein uS12.